Here is a 169-residue protein sequence, read N- to C-terminus: Phosphopantetheine adenylyltransferase (169 aa).

Ser10 provides a ligand contact to substrate. ATP-binding positions include 10-11 and His18; that span reads SF. Residues Lys42, Thr79, and Arg93 each coordinate substrate. Residues 94–96, Glu104, and 129–135 contribute to the ATP site; these read GLR and VRPITAT.

This sequence belongs to the bacterial CoaD family. Homohexamer. Mg(2+) serves as cofactor.

The protein resides in the cytoplasm. It carries out the reaction (R)-4'-phosphopantetheine + ATP + H(+) = 3'-dephospho-CoA + diphosphate. Its pathway is cofactor biosynthesis; coenzyme A biosynthesis; CoA from (R)-pantothenate: step 4/5. Functionally, reversibly transfers an adenylyl group from ATP to 4'-phosphopantetheine, yielding dephospho-CoA (dPCoA) and pyrophosphate. The chain is Phosphopantetheine adenylyltransferase from Rhodopseudomonas palustris (strain ATCC BAA-98 / CGA009).